We begin with the raw amino-acid sequence, 234 residues long: DNA repair protein RecO (234 aa).

Belongs to the RecO family.

Its function is as follows. Involved in DNA repair and RecF pathway recombination. The sequence is that of DNA repair protein RecO from Idiomarina loihiensis (strain ATCC BAA-735 / DSM 15497 / L2-TR).